A 308-amino-acid chain; its full sequence is UPF0282 protein YG5714_2245 (308 aa).

It belongs to the UPF0282 family.

This is UPF0282 protein YG5714_2245 from Saccharolobus islandicus (strain Y.G.57.14 / Yellowstone #1) (Sulfolobus islandicus).